Reading from the N-terminus, the 213-residue chain is MEIVILPTETTINIQKMEQENTAQGSEKPSVQSVKPWSDQEIRSFLQEWEFLEREVYRVKKKYHIVSKAIAQRLKQRGINKSWKECLQMLISLQDLYFTIQEANQRPRCQPLPCPYGEALHRILGYRWKISVFSGPPCADVVNLAPPEHPPQAYGVPIVFQEPMWAPTPVIYVENPQVPGWEPWNMNGHVPYMYPALPPAAPGPLTQWAISTD.

This is an uncharacterized protein from Homo sapiens (Human).